The primary structure comprises 613 residues: Cleavage and polyadenylation specificity factor subunit 3-II (613 aa).

An HXHXDH motif motif is present at residues 67-72 (HFHMDH).

The protein belongs to the metallo-beta-lactamase superfamily. RNA-metabolizing metallo-beta-lactamase-like family. INTS11 subfamily. As to quaternary structure, component of the CPSF complex, at least composed of CPSF160, CPSF100, CPSF73-I, CPSF73-II, CPSF30, FY and FIPS5. Interacts with CPSF30, CPSF100, CPSF160 and FY. Highly expressed in senescence leaves, petals, stamens, pollen and late stages of siliques with seeds. Also detected in roots, stems, leaves and seedlings.

The protein localises to the nucleus. In terms of biological role, component of the cleavage and polyadenylation specificity factor (CPSF) complex that play a key role in pre-mRNA 3'-end formation, recognizing the AAUAAA signal sequence and interacting with poly(A) polymerase and other factors to bring about cleavage and poly(A) addition. May function as mRNA 3'-end-processing endonuclease and also be involved in the histone 3'-end pre-mRNA processing. The sequence is that of Cleavage and polyadenylation specificity factor subunit 3-II (CPSF73-II) from Arabidopsis thaliana (Mouse-ear cress).